Reading from the N-terminus, the 61-residue chain is Photosystem II reaction center protein K (61 aa).

The propeptide occupies 1–24 (MLNIFSLICICLNSVLYSSSFFVA). The chain crosses the membrane as a helical span at residues 40–60 (MPVIPVLFFLLAFVWQAAVSF).

This sequence belongs to the PsbK family. In terms of assembly, PSII is composed of 1 copy each of membrane proteins PsbA, PsbB, PsbC, PsbD, PsbE, PsbF, PsbH, PsbI, PsbJ, PsbK, PsbL, PsbM, PsbT, PsbX, PsbY, PsbZ, Psb30/Ycf12, at least 3 peripheral proteins of the oxygen-evolving complex and a large number of cofactors. It forms dimeric complexes.

The protein localises to the plastid. It is found in the chloroplast thylakoid membrane. Its function is as follows. One of the components of the core complex of photosystem II (PSII). PSII is a light-driven water:plastoquinone oxidoreductase that uses light energy to abstract electrons from H(2)O, generating O(2) and a proton gradient subsequently used for ATP formation. It consists of a core antenna complex that captures photons, and an electron transfer chain that converts photonic excitation into a charge separation. This chain is Photosystem II reaction center protein K, found in Morus indica (Mulberry).